Here is an 854-residue protein sequence, read N- to C-terminus: Zinc finger protein 341 (854 aa).

A C2H2-type 1; atypical zinc finger spans residues 53 to 76 (FLCGKCKKQFNSLPAFMTHKREQC). Residues 152-217 (DQPMPQGPPP…GRPNPGGNGV (66 aa)) are disordered. Positions 163–176 (QSSLNMHSVPSYLT) are enriched in polar residues. Residues 177–210 (QPPPPPPPPPPLPPPPPPQPPPPPPQSLGPPGRP) are compositionally biased toward pro residues. 2 consecutive C2H2-type zinc fingers follow at residues 322–344 (LKCS…IRSH) and 350–372 (FQCI…MQTH). The interval 399-434 (SRQEDEESTGLGQPLPGAPQPQALSTAGEEEGDKPE) is disordered. The span at 408 to 422 (GLGQPLPGAPQPQAL) shows a compositional bias: low complexity. 9 C2H2-type zinc fingers span residues 445–467 (YLCQ…MTQH), 473–497 (YKCV…IKSH), 503–525 (YRCH…QYSH), 540–564 (YKCV…TATH), 566–588 (FPCP…LPTH), 594–616 (FKCQ…AHIH), 622–644 (YKCS…MLIH), 650–677 (YKCP…ILSH), and 683–705 (HKCA…QRAH). The segment at 731–763 (CRLGPQKDKDLQTRRPPQRRAAPRSCGSGGRKV) is disordered.

Belongs to the krueppel C2H2-type zinc-finger protein family. In terms of assembly, binds DNA and to the STAT3 promoter.

Its subcellular location is the nucleus. In terms of biological role, transcriptional activator of STAT3 involved in the regulation of immune homeostasis. Also able to activate STAT1 transcription. The chain is Zinc finger protein 341 (ZNF341) from Homo sapiens (Human).